Consider the following 200-residue polypeptide: GTP cyclohydrolase-2 (200 aa).

GTP is bound at residue 49–53 (RIHSE). Residues Cys-54, Cys-65, and Cys-67 each coordinate Zn(2+). Residues Gln-70, 92-94 (EGR), and Thr-114 contribute to the GTP site. Asp-126 serves as the catalytic Proton acceptor. Residue Arg-128 is the Nucleophile of the active site. Positions 149 and 154 each coordinate GTP.

It belongs to the GTP cyclohydrolase II family. The cofactor is Zn(2+).

The catalysed reaction is GTP + 4 H2O = 2,5-diamino-6-hydroxy-4-(5-phosphoribosylamino)-pyrimidine + formate + 2 phosphate + 3 H(+). It functions in the pathway cofactor biosynthesis; riboflavin biosynthesis; 5-amino-6-(D-ribitylamino)uracil from GTP: step 1/4. Its function is as follows. Catalyzes the conversion of GTP to 2,5-diamino-6-ribosylamino-4(3H)-pyrimidinone 5'-phosphate (DARP), formate and pyrophosphate. In Saccharophagus degradans (strain 2-40 / ATCC 43961 / DSM 17024), this protein is GTP cyclohydrolase-2.